The sequence spans 175 residues: Protein FLOWERING LOCUS T (175 aa).

This sequence belongs to the phosphatidylethanolamine-binding protein family. As to quaternary structure, interacts with FD/BZIP14 and FDP/BZIP27. Interacts with FTIP1/MCTP1 in phloem companion cells. Interacts with NAKR1. Mostly localized in leaves vasculature.

It is found in the cytoplasm. The protein localises to the nucleus. It localises to the endoplasmic reticulum. In terms of biological role, component of the mobile flower-promoting signal (floral stimulus or florigen). Promotes the transition from vegetative growth to flowering. Required for 'SEPALLATA3' (SEP3) and 'FRUITFULL' (FUL) accumulation in mature rosette leaves. Seems to acts in parallel with 'LEAFY' to induce flowering by regulating 'APETALA1'. Translated in leaves and then transported to the shoot apical meristem where it activates the transcription of several floral meristem identity genes. May play a role in both the autonomous and the long-day flowering pathways. This Arabidopsis thaliana (Mouse-ear cress) protein is Protein FLOWERING LOCUS T.